A 170-amino-acid chain; its full sequence is Inosine/xanthosine triphosphatase (170 aa).

The protein belongs to the YjjX NTPase family. Homodimer. It depends on Mg(2+) as a cofactor. The cofactor is Mn(2+).

The enzyme catalyses XTP + H2O = XDP + phosphate + H(+). The catalysed reaction is ITP + H2O = IDP + phosphate + H(+). Its function is as follows. Phosphatase that hydrolyzes non-canonical purine nucleotides such as XTP and ITP to their respective diphosphate derivatives. Probably excludes non-canonical purines from DNA/RNA precursor pool, thus preventing their incorporation into DNA/RNA and avoiding chromosomal lesions. In Aliivibrio fischeri (strain MJ11) (Vibrio fischeri), this protein is Inosine/xanthosine triphosphatase.